Consider the following 561-residue polypeptide: DNA ligase B (561 aa).

Lysine 125 serves as the catalytic N6-AMP-lysine intermediate.

Belongs to the NAD-dependent DNA ligase family. LigB subfamily.

It carries out the reaction NAD(+) + (deoxyribonucleotide)n-3'-hydroxyl + 5'-phospho-(deoxyribonucleotide)m = (deoxyribonucleotide)n+m + AMP + beta-nicotinamide D-nucleotide.. In terms of biological role, catalyzes the formation of phosphodiester linkages between 5'-phosphoryl and 3'-hydroxyl groups in double-stranded DNA using NAD as a coenzyme and as the energy source for the reaction. In Salmonella heidelberg (strain SL476), this protein is DNA ligase B.